Here is a 421-residue protein sequence, read N- to C-terminus: Lipid II:glycine glycyltransferase (421 aa).

The protein belongs to the FemABX family. In terms of assembly, monomer.

It localises to the cytoplasm. The catalysed reaction is beta-D-GlcNAc-(1-&gt;4)-Mur2Ac(oyl-L-Ala-D-isoglutaminyl-L-Lys-D-Ala-D-Ala)-di-trans,octa-cis-undecaprenyl diphosphate + glycyl-tRNA(Gly) = beta-D-GlcNAc-(1-&gt;4)-Mur2Ac(oyl-L-Ala-D-isoglutaminyl-L-Lys-(N(6)-Gly)-D-Ala-D-Ala)-di-trans,octa-cis-undecaprenyl diphosphate + tRNA(Gly) + H(+). Functionally, catalyzes the incorporation of the first glycine of the pentaglycine interpeptide bridge, which is characteristic of the S.aureus peptidoglycan. This glycine is added to the epsilon-amino group of the L-lysine of the membrane-bound lipid II intermediate (GlcNAc-(beta-1,4)-N-acetylmuramic acid(-L-Ala-D-iGln-L-Lys-D-Ala-D-Ala)-pyrophosphoryl-undecaprenol), using glycyl-tRNA(Gly) as donor, in a ribosome-independent mechanism. Involved in methicillin resistance. This Staphylococcus aureus (strain MRSA252) protein is Lipid II:glycine glycyltransferase (femX).